The sequence spans 374 residues: Alanine racemase (374 aa).

The active-site Proton acceptor; specific for D-alanine is Lys-40. The residue at position 40 (Lys-40) is an N6-(pyridoxal phosphate)lysine. Position 136 (Arg-136) interacts with substrate. Tyr-264 acts as the Proton acceptor; specific for L-alanine in catalysis. A substrate-binding site is contributed by Met-311.

It belongs to the alanine racemase family. Pyridoxal 5'-phosphate is required as a cofactor.

The catalysed reaction is L-alanine = D-alanine. It participates in amino-acid biosynthesis; D-alanine biosynthesis; D-alanine from L-alanine: step 1/1. Functionally, catalyzes the interconversion of L-alanine and D-alanine. May also act on other amino acids. The polypeptide is Alanine racemase (alr) (Pediococcus pentosaceus (strain ATCC 25745 / CCUG 21536 / LMG 10740 / 183-1w)).